A 254-amino-acid chain; its full sequence is 5'/3'-nucleotidase SurE (254 aa).

A divalent metal cation contacts are provided by aspartate 9, aspartate 10, serine 40, and asparagine 93.

It belongs to the SurE nucleotidase family. The cofactor is a divalent metal cation.

It localises to the cytoplasm. The enzyme catalyses a ribonucleoside 5'-phosphate + H2O = a ribonucleoside + phosphate. It catalyses the reaction a ribonucleoside 3'-phosphate + H2O = a ribonucleoside + phosphate. The catalysed reaction is [phosphate](n) + H2O = [phosphate](n-1) + phosphate + H(+). Nucleotidase with a broad substrate specificity as it can dephosphorylate various ribo- and deoxyribonucleoside 5'-monophosphates and ribonucleoside 3'-monophosphates with highest affinity to 3'-AMP. Also hydrolyzes polyphosphate (exopolyphosphatase activity) with the preference for short-chain-length substrates (P20-25). Might be involved in the regulation of dNTP and NTP pools, and in the turnover of 3'-mononucleotides produced by numerous intracellular RNases (T1, T2, and F) during the degradation of various RNAs. In Proteus mirabilis (strain HI4320), this protein is 5'/3'-nucleotidase SurE.